Here is a 437-residue protein sequence, read N- to C-terminus: Aminopeptidase G (437 aa).

Residues C70, H361, and N382 contribute to the active site.

Belongs to the peptidase C1 family.

It is found in the cytoplasm. This Lactobacillus delbrueckii subsp. lactis protein is Aminopeptidase G (pepG).